The chain runs to 696 residues: Elongation factor G (696 aa).

The 279-residue stretch at 8–286 (EDVRNIGIAA…AVVHYLPSPV (279 aa)) folds into the tr-type G domain. GTP-binding positions include 17–24 (AHIDAGKT), 81–85 (DTPGH), and 135–138 (NKMD).

Belongs to the TRAFAC class translation factor GTPase superfamily. Classic translation factor GTPase family. EF-G/EF-2 subfamily.

It is found in the cytoplasm. Functionally, catalyzes the GTP-dependent ribosomal translocation step during translation elongation. During this step, the ribosome changes from the pre-translocational (PRE) to the post-translocational (POST) state as the newly formed A-site-bound peptidyl-tRNA and P-site-bound deacylated tRNA move to the P and E sites, respectively. Catalyzes the coordinated movement of the two tRNA molecules, the mRNA and conformational changes in the ribosome. The protein is Elongation factor G of Sulfurovum sp. (strain NBC37-1).